The chain runs to 396 residues: MSAKKERVVVGLSGGVDSAVSAWLLKQQGHEVVGLFMKNWEDDDDDEYCSSRQDFLDAASVADVIGIEIEHVNFAAEYRDRVFAEFLREYEAGRTPNPDVLCNAEIKFKAFLDHALRLGAGKIATGHYARVRRAPALPGMPDGPLDESSAGALDRARVREAGGRFELLKGLDASKDQSYFLHRLSQAQLARTLFPVGELPKTEVRRIAAEIRLPVAAKKDSTGICFIGERPFREFLNRYLAHAPGPIKDERGRTLGEHVGLSFYTLGQRKGIGIGGVKERGAARGGADHAPWFVARKDRPHNTLYVVQGHDHPWLQSFRLEADDASWIAGTPPAPGALAAKTRYRQADASCVLAPGADGRFRLDFGVPQWAVTPGQSAVLYDGEVCLGGGVIAAAA.

Residues 11–18 (GLSGGVDS) and Met-37 each bind ATP. Residues 97–99 (NPD) are interaction with target base in tRNA. Cys-102 serves as the catalytic Nucleophile. A disulfide bond links Cys-102 and Cys-225. Gly-126 contributes to the ATP binding site. Positions 175–177 (KDQ) are interaction with tRNA. The active-site Cysteine persulfide intermediate is the Cys-225. The segment at 343 to 344 (RY) is interaction with tRNA.

Belongs to the MnmA/TRMU family.

It is found in the cytoplasm. It carries out the reaction S-sulfanyl-L-cysteinyl-[protein] + uridine(34) in tRNA + AH2 + ATP = 2-thiouridine(34) in tRNA + L-cysteinyl-[protein] + A + AMP + diphosphate + H(+). Its function is as follows. Catalyzes the 2-thiolation of uridine at the wobble position (U34) of tRNA, leading to the formation of s(2)U34. This Methylibium petroleiphilum (strain ATCC BAA-1232 / LMG 22953 / PM1) protein is tRNA-specific 2-thiouridylase MnmA.